The primary structure comprises 314 residues: 4-hydroxy-3-methylbut-2-enyl diphosphate reductase (314 aa).

Residue Cys12 coordinates [4Fe-4S] cluster. The (2E)-4-hydroxy-3-methylbut-2-enyl diphosphate site is built by His41 and His74. The dimethylallyl diphosphate site is built by His41 and His74. The isopentenyl diphosphate site is built by His41 and His74. Cys96 is a binding site for [4Fe-4S] cluster. His124 lines the (2E)-4-hydroxy-3-methylbut-2-enyl diphosphate pocket. His124 serves as a coordination point for dimethylallyl diphosphate. His124 contributes to the isopentenyl diphosphate binding site. Catalysis depends on Glu126, which acts as the Proton donor. Thr167 provides a ligand contact to (2E)-4-hydroxy-3-methylbut-2-enyl diphosphate. Cys197 is a [4Fe-4S] cluster binding site. 4 residues coordinate (2E)-4-hydroxy-3-methylbut-2-enyl diphosphate: Ser225, Ser226, Asn227, and Ser269. The dimethylallyl diphosphate site is built by Ser225, Ser226, Asn227, and Ser269. Positions 225, 226, 227, and 269 each coordinate isopentenyl diphosphate.

This sequence belongs to the IspH family. Requires [4Fe-4S] cluster as cofactor.

It carries out the reaction isopentenyl diphosphate + 2 oxidized [2Fe-2S]-[ferredoxin] + H2O = (2E)-4-hydroxy-3-methylbut-2-enyl diphosphate + 2 reduced [2Fe-2S]-[ferredoxin] + 2 H(+). It catalyses the reaction dimethylallyl diphosphate + 2 oxidized [2Fe-2S]-[ferredoxin] + H2O = (2E)-4-hydroxy-3-methylbut-2-enyl diphosphate + 2 reduced [2Fe-2S]-[ferredoxin] + 2 H(+). It functions in the pathway isoprenoid biosynthesis; dimethylallyl diphosphate biosynthesis; dimethylallyl diphosphate from (2E)-4-hydroxy-3-methylbutenyl diphosphate: step 1/1. It participates in isoprenoid biosynthesis; isopentenyl diphosphate biosynthesis via DXP pathway; isopentenyl diphosphate from 1-deoxy-D-xylulose 5-phosphate: step 6/6. Functionally, catalyzes the conversion of 1-hydroxy-2-methyl-2-(E)-butenyl 4-diphosphate (HMBPP) into a mixture of isopentenyl diphosphate (IPP) and dimethylallyl diphosphate (DMAPP). Acts in the terminal step of the DOXP/MEP pathway for isoprenoid precursor biosynthesis. The protein is 4-hydroxy-3-methylbut-2-enyl diphosphate reductase of Idiomarina loihiensis (strain ATCC BAA-735 / DSM 15497 / L2-TR).